A 682-amino-acid polypeptide reads, in one-letter code: Potassium-transporting ATPase ATP-binding subunit (682 aa).

Helical transmembrane passes span 34-54 (PVMF…IAMA), 62-82 (ALFS…ANFA), 219-239 (IALT…TATL), and 254-274 (VLVA…LSAI). Catalysis depends on D307, which acts as the 4-aspartylphosphate intermediate. Residues D344, E348, 377–384 (FTAQSRMS), and K395 each bind ATP. Mg(2+)-binding residues include D518 and D522. The next 3 membrane-spanning stretches (helical) occupy residues 588 to 608 (FAII…LNIM), 616 to 636 (AILS…PLAL), and 656 to 676 (IYGL…DLLL).

It belongs to the cation transport ATPase (P-type) (TC 3.A.3) family. Type IA subfamily. The system is composed of three essential subunits: KdpA, KdpB and KdpC.

It localises to the cell inner membrane. The catalysed reaction is K(+)(out) + ATP + H2O = K(+)(in) + ADP + phosphate + H(+). Functionally, part of the high-affinity ATP-driven potassium transport (or Kdp) system, which catalyzes the hydrolysis of ATP coupled with the electrogenic transport of potassium into the cytoplasm. This subunit is responsible for energy coupling to the transport system and for the release of the potassium ions to the cytoplasm. The protein is Potassium-transporting ATPase ATP-binding subunit of Shigella boydii serotype 18 (strain CDC 3083-94 / BS512).